Reading from the N-terminus, the 107-residue chain is UPF0473 protein Ldb1604 (107 aa).

Belongs to the UPF0473 family.

The chain is UPF0473 protein Ldb1604 from Lactobacillus delbrueckii subsp. bulgaricus (strain ATCC 11842 / DSM 20081 / BCRC 10696 / JCM 1002 / NBRC 13953 / NCIMB 11778 / NCTC 12712 / WDCM 00102 / Lb 14).